Consider the following 346-residue polypeptide: Dihydroorotase (346 aa).

Residues His-13 and His-15 each coordinate Zn(2+). Substrate-binding positions include 15–17 and Asn-41; that span reads HLR. Lys-99, His-136, and His-174 together coordinate Zn(2+). Lys-99 bears the N6-carboxylysine mark. Residue His-136 coordinates substrate. Residue Leu-219 participates in substrate binding. Asp-247 contributes to the Zn(2+) binding site. Residue Asp-247 is part of the active site. Residues His-251 and Ala-263 each contribute to the substrate site.

Belongs to the metallo-dependent hydrolases superfamily. DHOase family. Class II DHOase subfamily. As to quaternary structure, homodimer. Zn(2+) is required as a cofactor.

It carries out the reaction (S)-dihydroorotate + H2O = N-carbamoyl-L-aspartate + H(+). Its pathway is pyrimidine metabolism; UMP biosynthesis via de novo pathway; (S)-dihydroorotate from bicarbonate: step 3/3. Catalyzes the reversible cyclization of carbamoyl aspartate to dihydroorotate. The chain is Dihydroorotase from Rhizobium rhizogenes (strain K84 / ATCC BAA-868) (Agrobacterium radiobacter).